The primary structure comprises 276 residues: Chlorophyll a-b binding protein CP29.3, chloroplastic (276 aa).

The transit peptide at 1-29 (MATTTAAAASGIFGIRIQDPRPGTGRVQA) directs the protein to the chloroplast. A disordered region spans residues 1 to 53 (MATTTAAAASGIFGIRIQDPRPGTGRVQARFGFSFGKKKPAPPPKKSRQVQDD). The span at 36-48 (GKKKPAPPPKKSR) shows a compositional bias: basic residues. Residue Trp59 participates in chlorophyll b binding. Chlorophyll a contacts are provided by Phe79, Glu141, and His144. A helical membrane pass occupies residues 147-167 (WAMLGTLGAIAVEALTGIAWQ). Leu181 serves as a coordination point for chlorophyll a. A helical transmembrane segment spans residues 185 to 205 (LPFSLTTLIWIEVLVVGYIEF). Residues Glu204 and Arg207 each coordinate chlorophyll b. Chlorophyll a is bound by residues Glu242, His245, Arg247, and Gln259. A helical membrane pass occupies residues 248–268 (LAMVAFLIFALQAAFTGKGPV).

Belongs to the light-harvesting chlorophyll a/b-binding (LHC) protein family. As to quaternary structure, the LHC complex consists of chlorophyll a-b binding proteins. The cofactor is Binds at least 14 chlorophylls (8 Chl-a and 6 Chl-b) and carotenoids such as lutein and neoxanthin.. Photoregulated by reversible phosphorylation of its threonine residues.

It localises to the plastid. Its subcellular location is the chloroplast thylakoid membrane. Its function is as follows. The light-harvesting complex (LHC) functions as a light receptor, it captures and delivers excitation energy to photosystems with which it is closely associated. The protein is Chlorophyll a-b binding protein CP29.3, chloroplastic (LHCB4.3) of Arabidopsis thaliana (Mouse-ear cress).